The sequence spans 186 residues: dITP/XTP pyrophosphatase (186 aa).

7–12 (TSNPGK) serves as a coordination point for substrate. Positions 36 and 65 each coordinate Mg(2+). D65 acts as the Proton acceptor in catalysis. Substrate is bound by residues S66, 140–143 (FGYD), K163, and 168–169 (HR).

Belongs to the HAM1 NTPase family. Homodimer. Mg(2+) is required as a cofactor. Mn(2+) serves as cofactor.

The catalysed reaction is XTP + H2O = XMP + diphosphate + H(+). It catalyses the reaction dITP + H2O = dIMP + diphosphate + H(+). It carries out the reaction ITP + H2O = IMP + diphosphate + H(+). In terms of biological role, pyrophosphatase that catalyzes the hydrolysis of nucleoside triphosphates to their monophosphate derivatives, with a high preference for the non-canonical purine nucleotides XTP (xanthosine triphosphate), dITP (deoxyinosine triphosphate) and ITP. Seems to function as a house-cleaning enzyme that removes non-canonical purine nucleotides from the nucleotide pool, thus preventing their incorporation into DNA/RNA and avoiding chromosomal lesions. The polypeptide is dITP/XTP pyrophosphatase (Pyrococcus horikoshii (strain ATCC 700860 / DSM 12428 / JCM 9974 / NBRC 100139 / OT-3)).